Consider the following 154-residue polypeptide: Nitrogen regulatory protein (154 aa).

The PTS EIIA type-2 domain occupies 6–150 (QILTPGRSLV…EALYQIVVDV (145 aa)). The Tele-phosphohistidine intermediate role is filled by His-68.

The protein localises to the cytoplasm. Functionally, seems to have a role in regulating nitrogen assimilation. This is Nitrogen regulatory protein (ptsN) from Pseudomonas aeruginosa (strain ATCC 15692 / DSM 22644 / CIP 104116 / JCM 14847 / LMG 12228 / 1C / PRS 101 / PAO1).